The sequence spans 303 residues: NAD kinase (303 aa).

Catalysis depends on aspartate 85, which acts as the Proton acceptor. NAD(+)-binding positions include 85–86, arginine 90, 159–160, lysine 187, aspartate 189, alanine 224, and glutamine 259; these read DG and ND.

This sequence belongs to the NAD kinase family. Requires a divalent metal cation as cofactor.

The protein resides in the cytoplasm. The catalysed reaction is NAD(+) + ATP = ADP + NADP(+) + H(+). Involved in the regulation of the intracellular balance of NAD and NADP, and is a key enzyme in the biosynthesis of NADP. Catalyzes specifically the phosphorylation on 2'-hydroxyl of the adenosine moiety of NAD to yield NADP. This chain is NAD kinase, found in Bdellovibrio bacteriovorus (strain ATCC 15356 / DSM 50701 / NCIMB 9529 / HD100).